A 314-amino-acid chain; its full sequence is Transmembrane protein 248 (314 aa).

Residues 21 to 41 (VVFMISVSAMAIAFLTLGYFF) traverse the membrane as a helical segment. Residues 78-106 (LTNDTTTPESTMTSGQARASTQSPQALED) form a disordered region. Positions 80 to 102 (NDTTTPESTMTSGQARASTQSPQ) are enriched in polar residues. The next 3 helical transmembrane spans lie at 179–199 (QVVF…PVTV), 236–258 (FWCY…TVIV), and 270–290 (LMHT…YAVI).

This sequence belongs to the TMEM248 family.

It localises to the membrane. The protein is Transmembrane protein 248 (TMEM248) of Homo sapiens (Human).